The following is a 440-amino-acid chain: Serine/threonine-protein kinase STK11 (440 aa).

The Protein kinase domain maps to 49-309 (YLMGDLLGEG…IQQIRQHNWF (261 aa)). Residues 55–63 (LGEGSYGKV) and Lys-78 contribute to the ATP site. The active-site Proton acceptor is the Asp-176. Residues Thr-336 and Thr-365 each carry the phosphothreonine; by autocatalysis modification. The interval 370–440 (VPGQVPEEEA…IRKLSTCKQQ (71 aa)) is disordered. The span at 430 to 440 (KIRKLSTCKQQ) shows a compositional bias: basic residues. Ser-435 is modified (phosphoserine; by PKA).

Belongs to the protein kinase superfamily. CAMK Ser/Thr protein kinase family. LKB1 subfamily. In terms of assembly, catalytic component of a trimeric complex composed of STK11/LKB1, STRAD (STRADA or STRADB) and CAB39/MO25 (CAB39/MO25alpha or CAB39L/MO25beta). Mg(2+) is required as a cofactor. It depends on Mn(2+) as a cofactor. Ubiquitously expressed in all tissues tested. High levels were observed in duodenum and skeletal muscle, lower levels in liver and pancreas.

It is found in the nucleus. The protein resides in the cytoplasm. The enzyme catalyses L-seryl-[protein] + ATP = O-phospho-L-seryl-[protein] + ADP + H(+). The catalysed reaction is L-threonyl-[protein] + ATP = O-phospho-L-threonyl-[protein] + ADP + H(+). Tumor suppressor serine/threonine-protein kinase that controls the activity of AMP-activated protein kinase (AMPK) family members, thereby playing a role in various processes such as cell metabolism, cell polarity, apoptosis and DNA damage response. Acts by phosphorylating the T-loop of AMPK family proteins, leading to promote their activity. In Gallus gallus (Chicken), this protein is Serine/threonine-protein kinase STK11.